A 345-amino-acid polypeptide reads, in one-letter code: Serpentine receptor class beta-13 (345 aa).

The Extracellular portion of the chain corresponds to 1-22; the sequence is MAGINQTKCDLGFQITFNTVYR. N5 carries an N-linked (GlcNAc...) asparagine glycan. Residues 23–43 traverse the membrane as a helical segment; that stretch reads FSQFYTFSVSSFAVPGLIYFM. Over 44-58 the chain is Cytoplasmic; the sequence is FKRLFQLYFHGNLKT. A helical membrane pass occupies residues 59–79; it reads LLIAYFISILLYAVMLCFAFG. At 80–103 the chain is on the extracellular side; sequence YQFFVPFFIKSNCDLIINKTLFKY. N97 carries an N-linked (GlcNAc...) asparagine glycan. A helical transmembrane segment spans residues 104-124; sequence IHTSVIFLLTTPMMFPLGFSI. At 125-142 the chain is on the cytoplasmic side; sequence ERFTAMAMASRYENIRTL. The helical transmembrane segment at 143–163 threads the bilayer; that stretch reads IGPVLVIFLIIPNCIIFYFLF. At 164-189 the chain is on the extracellular side; the sequence is QHETYDDTFISFLMLPNTTAVNFNTY. N180 carries N-linked (GlcNAc...) asparagine glycosylation. Residues 190 to 210 traverse the membrane as a helical segment; the sequence is LWFLLYLNIGNLALNVLLLLV. The Cytoplasmic segment spans residues 211–241; the sequence is HRKFKRRLLLHKTSLSTRYAIEEISQSSKFT. A helical transmembrane segment spans residues 242-262; the sequence is LIITFTHLLFFGCNTICSILV. Topologically, residues 263-280 are extracellular; sequence RVLGEPFFGSFINHSVAR. The N-linked (GlcNAc...) asparagine glycan is linked to N275. Residues 281-301 form a helical membrane-spanning segment; sequence GVNCAVPTYNLVIVVVGFVSL. The Cytoplasmic portion of the chain corresponds to 302–345; the sequence is SKLNSRRQQEVQTTVQLKTTGKEGARNYDNITANQWATITQIGF.

This sequence belongs to the nematode receptor-like protein srb family. Expressed in the head sensory neurons ASI, ASK and AWB. Not expressed in male somatic gonads or sperm.

The protein resides in the cell membrane. The protein localises to the perikaryon. It localises to the cell projection. Its subcellular location is the dendrite. Its function is as follows. G-protein coupled receptor that antagonizes the negative effects of the gcy-35 oxygen sensor on spermatogenesis. This leads to the maintenance of mitochondrial function in developing spermatocytes and/or spermatids prior to testis maturation during the early larval stages. Regulates the navigational capacity of sperm during hyperoxic conditions ensuring the proper targeting of sperm derived from males to the fertilization site in the uterus of hermaphrodites. May act in the same signaling pathway as the neuropeptide flp-21. The protein is Serpentine receptor class beta-13 of Caenorhabditis elegans.